Here is an 852-residue protein sequence, read N- to C-terminus: MVAKGKKASADAVYAKKTTRSANPFDNSTAQSSKRGNPFDVHVNKEKFKILGRICKHDRGMPGVSRAKALQKRAQTLGQQFAVKHKTNRFKDNRIGKHLSGDQLTESVMNARYLAEKMSQVRSNQKAEKFNLNDDELLTHRGQTLEEIEQYRDERSDDEELDDEALDADFTAAAHFGGEGDSAQDRQAAIDEMIVEQKRRKNEIAKEKDEVYDLTEKLDANYKLLLPLVAKVTKDEQDAKPPPDAYDKLLKEMIFEPRGSVADKLINPDELAKQEAARLEKLENERLRRMRADGEEDEEASVAKPKHRSADDLDDGYFLAGEDDEGDDTLAYDLDGNLGTHLNGKKEAVLKGDENEDDDDKEGEEEEEEDSDEESDSEVDNLSDLKESESESEPEEAPKASKKKAKKSADTIPASLDTSIPFTIKMPKTYEDFTELLSKHATAQKAIIIERIIKCNHPKLEGVNRENVVKLYSFLLQYLKDLFEDASEQDIREHFQLLSKLMPYLYELTQLNPERMSNTLLEVIKEKYEEFRKNHKMYPSLDTLVYFKLVANLYSTSDFRHPVVTPCFIFIQHVLSRSRVRTRQEISMGLFLVTVVLEFVSQSKRLVPAVFNFLQGIVHMSIPKRDVEQLEITPPFERDGPLSKLLALPANTESTKLEPQQLQPTDLVTQTITPDFKVRALDTSLLLIKEALQLVEEHVGACYLAQPFLALLSRLPLESYPEHVHQHHKDATELAEKLAAQKMKPLAPAEKKPKALRLLEPRFEAVYDDKRRPKMSKAKEERAKLLHKIKREKKGAIREIRRDTSFVQMLRLKQTLQSDKERHEKVKRIYQEASVQQGELNELSRAKKKKKF.

Residues 1-40 (MVAKGKKASADAVYAKKTTRSANPFDNSTAQSSKRGNPFD) form a disordered region. Positions 20–35 (RSANPFDNSTAQSSKR) are enriched in polar residues. The stretch at 190-221 (IDEMIVEQKRRKNEIAKEKDEVYDLTEKLDAN) forms a coiled coil. Disordered stretches follow at residues 288–324 (RRMRADGEEDEEASVAKPKHRSADDLDDGYFLAGEDD) and 338–410 (LGTH…KSAD). The span at 344 to 353 (GKKEAVLKGD) shows a compositional bias: basic and acidic residues. Positions 354–381 (ENEDDDDKEGEEEEEEDSDEESDSEVDN) are enriched in acidic residues. Residues 774–851 (KMSKAKEERA…ELSRAKKKKK (78 aa)) adopt a coiled-coil conformation.

This sequence belongs to the NOP14 family. Component of the ribosomal small subunit (SSU) processome.

Its subcellular location is the nucleus. It localises to the nucleolus. Its function is as follows. Involved in nucleolar processing of pre-18S ribosomal RNA. Has a role in the nuclear export of 40S pre-ribosomal subunit to the cytoplasm. In Drosophila melanogaster (Fruit fly), this protein is Nucleolar protein 14 homolog (l(3)07882).